The following is a 470-amino-acid chain: Zinc finger protein weckle (470 aa).

A required for homodimerization region spans residues 1 to 103 (MGVPTSDWIY…DALRLEYGLP (103 aa)). Residues 10-82 (YWCRLCARDD…SKVQAIFELL (73 aa)) enclose the ZAD domain. 4 residues coordinate Zn(2+): cysteine 12, cysteine 15, cysteine 55, and cysteine 58. Residues 156-265 (NSDPKVLASP…LSMSPHGSQS (110 aa)) are disordered. Phosphoserine is present on serine 168. The segment covering 195–208 (ESDDEEAILDEDEA) has biased composition (acidic residues). Residues 214 to 225 (LKRKRGRPKGSG) show a composition bias toward basic residues. A compositionally biased stretch (basic and acidic residues) spans 237-254 (TSREPDDNAKSKQDDKTS). A compositionally biased stretch (polar residues) spans 255–265 (ELSMSPHGSQS). C2H2-type zinc fingers lie at residues 271–294 (YPCK…HDMH), 300–322 (YVCD…QLVH), 328–350 (CICP…SQTH), 355–377 (FECN…KYVH), 383–405 (FKCE…LLGH), and 411–434 (YVCK…WKKH).

Homodimer. Interacts with Myd88 and Toll.

The protein resides in the cell membrane. Functionally, acts as an adapter to assemble/stabilize a Toll/wek/Myd88/tube complex; required for efficient recruitment of Myd88 to Toll. Dispensable for innate immune response; plays a minimal role, if any, in the immune defense against Gram-positive bacteria and fungi. Involved in dorsoventral axis determination. This chain is Zinc finger protein weckle, found in Drosophila melanogaster (Fruit fly).